A 459-amino-acid chain; its full sequence is Putrescine aminotransferase (459 aa).

Pyridoxal 5'-phosphate contacts are provided by residues 150–151 and Gln274; that span reads GT. An N6-(pyridoxal phosphate)lysine modification is found at Lys300. Thr332 lines the pyridoxal 5'-phosphate pocket.

This sequence belongs to the class-III pyridoxal-phosphate-dependent aminotransferase family. Putrescine aminotransferase subfamily. The cofactor is pyridoxal 5'-phosphate.

The catalysed reaction is an alkane-alpha,omega-diamine + 2-oxoglutarate = an omega-aminoaldehyde + L-glutamate. The enzyme catalyses putrescine + 2-oxoglutarate = 1-pyrroline + L-glutamate + H2O. It catalyses the reaction cadaverine + 2-oxoglutarate = 5-aminopentanal + L-glutamate. It participates in amine and polyamine degradation; putrescine degradation; 4-aminobutanal from putrescine (transaminase route): step 1/1. Its function is as follows. Catalyzes the aminotransferase reaction from putrescine to 2-oxoglutarate, leading to glutamate and 4-aminobutanal, which spontaneously cyclizes to form 1-pyrroline. This is the first step in one of two pathways for putrescine degradation, where putrescine is converted into 4-aminobutanoate (gamma-aminobutyrate or GABA) via 4-aminobutanal. Also functions as a cadaverine transaminase in a a L-lysine degradation pathway to succinate that proceeds via cadaverine, glutarate and L-2-hydroxyglutarate. This chain is Putrescine aminotransferase, found in Salmonella dublin (strain CT_02021853).